The sequence spans 770 residues: Potassium transporter 25 (770 aa).

Residues 1-23 (MDLEAAHGAAAAPGKRRRRARES) lie on the Cytoplasmic side of the membrane. A helical transmembrane segment spans residues 24-44 (WGASLLLAYQSLGVVYGDVAT). Topologically, residues 45–70 (SPLYVYKSAFAGDDIQHSAGNEEIYG) are extracellular. Residues 71–91 (VLSFVFWTLTLISLVKYVLIV) form a helical membrane-spanning segment. At 92-152 (LRADDGGEGG…MLERYRVLQR (61 aa)) the chain is on the cytoplasmic side. The chain crosses the membrane as a helical span at residues 153–173 (LLLLFALLGTCMVIGDGVLTP). The Extracellular segment spans residues 174 to 194 (AVSVYSAVSGLELSMEHEHHK). The helical transmembrane segment at 195–215 (YVQLPVTCAILIGLFALQHYG) threads the bilayer. The Cytoplasmic segment spans residues 216-218 (THR). Residues 219–239 (VGFIFAPIVCVWLLCISAIGV) traverse the membrane as a helical segment. The Extracellular portion of the chain corresponds to 240–267 (YNIVHWNHHVYRALSPYYMYQFLKKTQT). A helical membrane pass occupies residues 268 to 288 (GGWMSLGGILLCVTGSEAMYA). Residues 289 to 299 (DLGHFSQSSIK) are Cytoplasmic-facing. A helical membrane pass occupies residues 300–320 (IAFMSVVYPALVLAYMGQAAY). Topologically, residues 321 to 346 (ISQHHSFENAYHIGFYVSVPEKLRWP) are extracellular. The helical transmembrane segment at 347 to 367 (VLVIAILAAVVGSQAVITGTF) threads the bilayer. Residues 368 to 394 (SIIKQCSSLSCFPGVKIVHTSSTVHGQ) are Cytoplasmic-facing. Residues 395–415 (IYIPEINWILMILCLAVTLGF) traverse the membrane as a helical segment. Residues 416 to 425 (RNTKHLANAQ) are Extracellular-facing. A helical transmembrane segment spans residues 426–446 (GLAVITVMLVTTCLMSLVIVL). At 447-451 (CWNKS) the chain is on the cytoplasmic side. A helical transmembrane segment spans residues 452-472 (IFLALGFLIFFGTIEVLYFSA). Topologically, residues 473–479 (SLVKFHE) are extracellular. The chain crosses the membrane as a helical span at residues 480–500 (GAWVPITLSFIFMIVMCVWHY). Over 501–770 (GTIKKYEFDF…TLEVGMVYQV (270 aa)) the chain is Cytoplasmic.

Belongs to the HAK/KUP transporter (TC 2.A.72.3) family.

The protein resides in the membrane. In terms of biological role, high-affinity potassium transporter. The chain is Potassium transporter 25 (HAK25) from Oryza sativa subsp. japonica (Rice).